Reading from the N-terminus, the 63-residue chain is Lysis protein (63 aa).

Residues 21–43 (LYVWIALAIVLSDFTSIFSHWIW) traverse the membrane as a helical segment.

The protein belongs to the Leviviricetes lysis protein family.

It localises to the host cell inner membrane. The protein resides in the host cell outer membrane. Its function is as follows. Induces the formation of specific membrane adhesion sites between the inner and outer membranes, apparently leading to host cell lysis. Lysis may be performed via activation of host murein hydrolases. In Escherichia coli (Bacteriophage GA), this protein is Lysis protein.